Here is a 142-residue protein sequence, read N- to C-terminus: Peptide methionine sulfoxide reductase MsrB (142 aa).

Residues 3–126 form the MsrB domain; it reads KEKLKKKLSL…NSAALRFVPF (124 aa). C115 acts as the Nucleophile in catalysis.

It belongs to the MsrB Met sulfoxide reductase family.

The catalysed reaction is L-methionyl-[protein] + [thioredoxin]-disulfide + H2O = L-methionyl-(R)-S-oxide-[protein] + [thioredoxin]-dithiol. The protein is Peptide methionine sulfoxide reductase MsrB of Lactococcus lactis subsp. lactis (strain IL1403) (Streptococcus lactis).